The sequence spans 149 residues: 1,4-dihydroxy-2-naphthoyl-CoA hydrolase (149 aa).

The active site involves D19.

Belongs to the 4-hydroxybenzoyl-CoA thioesterase family. DHNA-CoA hydrolase subfamily.

The catalysed reaction is 1,4-dihydroxy-2-naphthoyl-CoA + H2O = 1,4-dihydroxy-2-naphthoate + CoA + H(+). It participates in cofactor biosynthesis; phylloquinone biosynthesis. It functions in the pathway quinol/quinone metabolism; 1,4-dihydroxy-2-naphthoate biosynthesis; 1,4-dihydroxy-2-naphthoate from chorismate: step 7/7. In terms of biological role, catalyzes the hydrolysis of 1,4-dihydroxy-2-naphthoyl-CoA (DHNA-CoA) to 1,4-dihydroxy-2-naphthoate (DHNA), a reaction involved in phylloquinone (vitamin K1) biosynthesis. This chain is 1,4-dihydroxy-2-naphthoyl-CoA hydrolase, found in Synechococcus sp. (strain CC9605).